A 235-amino-acid chain; its full sequence is Maximins-S type A (235 aa).

The signal sequence occupies residues 1–18 (MNFNYFILVLFFITSGHA). 2 propeptides span residues 19 to 35 (KSET…HIKR) and 52 to 65 (SAEE…LVKR). An Asparagine amide modification is found at asparagine 83. Positions 87–100 (SAEEQDLAEDLVTR) are excised as a propeptide. Asparagine 118 is subject to Asparagine amide. Residues 122–135 (SAEEQDLAEDLVKR) constitute a propeptide that is removed on maturation. Asparagine 153 carries the post-translational modification Asparagine amide. A propeptide spanning residues 157 to 170 (SAEEQDLAEDLVTR) is cleaved from the precursor. The residue at position 188 (lysine 188) is a Lysine amide. Positions 192-205 (SAEDQDLAEDLVTR) are excised as a propeptide. A Lysine amide modification is found at lysine 223. Positions 227-235 (SAEQEKDMK) are excised as a propeptide.

It belongs to the maximin-S family. Expressed by the skin dorsal glands.

The protein resides in the secreted. Functionally, maximin-S1 has no antimicrobial activity. Has no hemolytic activity. Its function is as follows. Maximin-S2 has an activity against mycoplasma but has no activity against common Gram-positive and Gram-negative bacteria nor fungi. Has no hemolytic activity. Maximin-S3 has an activity against mycoplasma but has no activity against common Gram-positive and Gram-negative bacteria nor fungi. Has no hemolytic activity. In terms of biological role, maximin-S4 has an activity against mycoplasma but has no activity against common Gram-positive and Gram-negative bacteria nor fungi. Has no hemolytic activity. Functionally, maximin-S5 has an activity against mycoplasma but has no activity against common Gram-positive and Gram-negative bacteria nor fungi. Has no hemolytic activity. The chain is Maximins-S type A from Bombina maxima (Giant fire-bellied toad).